The chain runs to 188 residues: Cell division protein SepF (188 aa).

It belongs to the SepF family. Homodimer. Interacts with FtsZ.

It is found in the cytoplasm. Cell division protein that is part of the divisome complex and is recruited early to the Z-ring. Probably stimulates Z-ring formation, perhaps through the cross-linking of FtsZ protofilaments. Its function overlaps with FtsA. The chain is Cell division protein SepF from Synechococcus sp. (strain CC9605).